Consider the following 274-residue polypeptide: Large ribosomal subunit protein uL2cz/uL2cy (274 aa).

The disordered stretch occupies residues 225–274 (PVDHPHGGGEGRAPIGRKKPVTPWGYPALGRRTRKRKKYSETLILRRRSK).

Belongs to the universal ribosomal protein uL2 family. Part of the 50S ribosomal subunit.

It is found in the plastid. It localises to the chloroplast. The chain is Large ribosomal subunit protein uL2cz/uL2cy (rpl2-A) from Crucihimalaya wallichii (Rock-cress).